Reading from the N-terminus, the 359-residue chain is Nicotinate-nucleotide--dimethylbenzimidazole phosphoribosyltransferase (359 aa).

Catalysis depends on E318, which acts as the Proton acceptor.

This sequence belongs to the CobT family. Homodimer.

The enzyme catalyses 5,6-dimethylbenzimidazole + nicotinate beta-D-ribonucleotide = alpha-ribazole 5'-phosphate + nicotinate + H(+). The protein operates within nucleoside biosynthesis; alpha-ribazole biosynthesis; alpha-ribazole from 5,6-dimethylbenzimidazole: step 1/2. Catalyzes the synthesis of alpha-ribazole-5'-phosphate from nicotinate mononucleotide (NAMN) and 5,6-dimethylbenzimidazole (DMB). The protein is Nicotinate-nucleotide--dimethylbenzimidazole phosphoribosyltransferase of Escherichia coli O127:H6 (strain E2348/69 / EPEC).